The sequence spans 193 residues: UPF0301 protein Fphi_1754 (193 aa).

Belongs to the UPF0301 (AlgH) family.

The protein is UPF0301 protein Fphi_1754 of Francisella philomiragia subsp. philomiragia (strain ATCC 25017 / CCUG 19701 / FSC 153 / O#319-036).